The primary structure comprises 234 residues: Ubiquitin domain-containing protein 1 (234 aa).

Positions 1-47 (MGGCVGTHHDSSGSLNENSDGTGVALGRNQPLKKDKPKWKSDYPMTD) are disordered. The span at 12-21 (SGSLNENSDG) shows a compositional bias: polar residues. Positions 32-41 (LKKDKPKWKS) are enriched in basic and acidic residues. The region spanning 152–227 (CQLRLRLSTG…VQVIVSQPIP (76 aa)) is the Ubiquitin-like domain.

Its function is as follows. May be involved in the regulation of cellular senescence through a positive feedback loop with TP53. The chain is Ubiquitin domain-containing protein 1 (ubtd1) from Xenopus laevis (African clawed frog).